Here is a 142-residue protein sequence, read N- to C-terminus: Ribosome-binding factor A (142 aa).

Residues 118–142 (DEAKQQEHGTVENAKQDGDKAEDDK) form a disordered region.

Belongs to the RbfA family. In terms of assembly, monomer. Binds 30S ribosomal subunits, but not 50S ribosomal subunits or 70S ribosomes.

It localises to the cytoplasm. Functionally, one of several proteins that assist in the late maturation steps of the functional core of the 30S ribosomal subunit. Associates with free 30S ribosomal subunits (but not with 30S subunits that are part of 70S ribosomes or polysomes). Required for efficient processing of 16S rRNA. May interact with the 5'-terminal helix region of 16S rRNA. The protein is Ribosome-binding factor A of Shewanella piezotolerans (strain WP3 / JCM 13877).